We begin with the raw amino-acid sequence, 458 residues long: Estrogen-related receptor gamma (458 aa).

Residue K40 forms a Glycyl lysine isopeptide (Lys-Gly) (interchain with G-Cter in SUMO) linkage. Over residues 42–52 (EPSSPASLTDS) the composition is skewed to polar residues. The interval 42–85 (EPSSPASLTDSVNHHSPGGSSDASGSYSSTMNGHQNGLDSPPLY) is disordered. S45 bears the Phosphoserine mark. Over residues 57 to 70 (SPGGSSDASGSYSS) the composition is skewed to low complexity. The segment at residues 125-200 (KRLCLVCGDI…VGMLKEGVRL (76 aa)) is a DNA-binding region (nuclear receptor). 2 consecutive NR C4-type zinc fingers follow at residues 128–148 (CLVC…CEAC) and 164–188 (CPAT…FMKC). In terms of domain architecture, NR LBD spans 233-457 (PYNKIVSHLL…KLFLEMLEAK (225 aa)).

Belongs to the nuclear hormone receptor family. NR3 subfamily. As to quaternary structure, homodimer. Binds TLE1, PNRC1 and PNRC2. Binds GRIP1. Interacts with NRIP1, NCOA1 and NCOR2. Post-translationally, acetylated by PCAF/KAT2 (in vitro). Sumoylation on Lys-40 is enhanced by phosphorylation at Ser-45 and represses transcriptional activity. In terms of processing, phosphorylation on Ser-45 enhances sumoylation on Lys-40 thus repressing transcriptional activity. In terms of tissue distribution, expressed in the heart, kidney, brain, lung, bone marrow, adrenal gland, trachea, spinal cord and thyroid gland.

The protein resides in the nucleus. Functionally, orphan receptor that acts as a transcription activator in the absence of bound ligand. Binds specifically to an estrogen response element and activates reporter genes controlled by estrogen response elements. Induces the expression of PERM1 in the skeletal muscle. This chain is Estrogen-related receptor gamma (ESRRG), found in Homo sapiens (Human).